A 786-amino-acid chain; its full sequence is Calcium-independent phospholipase A2-gamma (786 aa).

An N-linked (GlcNAc...) asparagine glycan is attached at Asn-4. 3 disordered regions span residues 158–180 (KKYS…IIDK), 225–285 (KENS…SLPI), and 321–348 (SKSQ…EEKK). Positions 225-245 (KENSHFQEKSELEGKKVEEGK) are enriched in basic and acidic residues. Polar residues-rich tracts occupy residues 246 to 258 (SSSL…TSQA) and 266 to 285 (SAGT…SLPI). Residues 449–644 (LTIDGGGTRG…LLNNPSALAM (196 aa)) form the PNPLA domain. A GXGXXG motif is present at residues 453 to 458 (GGGTRG). A helical membrane pass occupies residues 483–503 (ICGVSTGAILAFMLGLFHLPL). Positions 485–489 (GVSTG) match the GXSXG motif. The active-site Nucleophile is the Ser-487. The Proton acceptor role is filled by Asp-631. The DGA/G motif lies at 631-633 (DGG). Lys-740 carries the N6-succinyllysine modification.

In terms of tissue distribution, expressed in kidney, heart and brain.

The protein resides in the endoplasmic reticulum membrane. It localises to the mitochondrion membrane. The protein localises to the peroxisome membrane. The enzyme catalyses a 1,2-diacyl-sn-glycero-3-phosphocholine + H2O = a 1-acyl-sn-glycero-3-phosphocholine + a fatty acid + H(+). It catalyses the reaction a 1,2-diacyl-sn-glycero-3-phosphocholine + H2O = a 2-acyl-sn-glycero-3-phosphocholine + a fatty acid + H(+). It carries out the reaction a 1,2-diacyl-sn-glycero-3-phosphoethanolamine + H2O = a 1-acyl-sn-glycero-3-phosphoethanolamine + a fatty acid + H(+). The catalysed reaction is a 1-O-(1Z-alkenyl)-2-acyl-sn-glycero-3-phosphocholine + H2O = a 1-O-(1Z-alkenyl)-sn-glycero-3-phosphocholine + a fatty acid + H(+). The enzyme catalyses a 1-acyl-sn-glycero-3-phosphocholine + H2O = sn-glycerol 3-phosphocholine + a fatty acid + H(+). It catalyses the reaction 1-acyl-2-(9Z,12Z)-octadecadienoyl-sn-glycero-3-phosphocholine + H2O = a 1-acyl-sn-glycero-3-phosphocholine + (9Z,12Z)-octadecadienoate + H(+). It carries out the reaction 1-acyl-2-(5Z,8Z,11Z,14Z-eicosatetraenoyl)-sn-glycero-3-phosphocholine + H2O = a 1-acyl-sn-glycero-3-phosphocholine + (5Z,8Z,11Z,14Z)-eicosatetraenoate + H(+). The catalysed reaction is 1-hexadecanoyl-2-(5Z,8Z,11Z,14Z-eicosatetraenoyl)-sn-glycero-3-phosphocholine + H2O = 1-hexadecanoyl-sn-glycero-3-phosphocholine + (5Z,8Z,11Z,14Z)-eicosatetraenoate + H(+). The enzyme catalyses 1-octadecanoyl-2-(9Z-octadecenoyl)-sn-glycero-3-phosphocholine + H2O = 1-octadecanoyl-sn-glycero-3-phosphocholine + (9Z)-octadecenoate + H(+). It catalyses the reaction 1-hexadecanoyl-2-(9Z-octadecenoyl)-sn-glycero-3-phosphocholine + H2O = 1-hexadecanoyl-sn-glycero-3-phosphocholine + (9Z)-octadecenoate + H(+). It carries out the reaction 1-hexadecanoyl-2-(9Z,12Z-octadecadienoyl)-sn-glycero-3-phosphocholine + H2O = (9Z,12Z)-octadecadienoate + 1-hexadecanoyl-sn-glycero-3-phosphocholine + H(+). The catalysed reaction is 1-acyl-2-(9Z,12Z)-octadecadienoyl-sn-glycero-3-phosphoethanolamine + H2O = a 1-acyl-sn-glycero-3-phosphoethanolamine + (9Z,12Z)-octadecadienoate + H(+). The enzyme catalyses 1-acyl-2-(5Z,8Z,11Z,14Z)-eicosatetraenoyl-sn-glycero-3-phosphoethanolamine + H2O = a 1-acyl-sn-glycero-3-phosphoethanolamine + (5Z,8Z,11Z,14Z)-eicosatetraenoate + H(+). It catalyses the reaction 1-hexadecanoyl-2-(5Z,8Z,11Z,14Z-eicosatetraenoyl)-sn-glycero-3-phosphoethanolamine + H2O = 1-hexadecanoyl-sn-glycero-3-phosphoethanolamine + (5Z,8Z,11Z,14Z)-eicosatetraenoate + H(+). It carries out the reaction 1-hexadecanoyl-2-(5Z,8Z,11Z,14Z-eicosatetraenoyl)-sn-glycero-3-phosphocholine + H2O = 2-(5Z,8Z,11Z,14Z)-eicosatetraenoyl-sn-glycero-3-phosphocholine + hexadecanoate + H(+). The catalysed reaction is 1-octadecanoyl-2-(9Z-octadecenoyl)-sn-glycero-3-phosphocholine + H2O = 2-(9Z-octadecenoyl)-sn-glycero-3-phosphocholine + octadecanoate + H(+). The enzyme catalyses 1-hexadecanoyl-2-(4Z,7Z,10Z,13Z,16Z,19Z-docosahexaenoyl)-sn-glycero-3-phosphocholine + H2O = 2-(4Z,7Z,10Z,13Z,16Z,19Z-docosahexaenoyl)-sn-glycero-3-phosphocholine + hexadecanoate + H(+). It catalyses the reaction 1-O-(1Z)-hexadecenyl-2 (5Z,8Z,11Z,14Z)-eicosatetraenoyl-sn-glycero-3-phosphocholine + H2O = 1-(1Z-hexadecenyl)-sn-glycero-3-phosphocholine + (5Z,8Z,11Z,14Z)-eicosatetraenoate + H(+). It carries out the reaction 1-O-(1Z-hexadecenyl)-2-(9Z-octadecenoyl)-sn-glycero-3-phosphocholine + H2O = 1-(1Z-hexadecenyl)-sn-glycero-3-phosphocholine + (9Z)-octadecenoate + H(+). The catalysed reaction is 1-hexadecanoyl-sn-glycero-3-phosphocholine + H2O = sn-glycerol 3-phosphocholine + hexadecanoate + H(+). The enzyme catalyses 1',3'-bis-[1,2-di-(9Z,12Z-octadecadienoyl)-sn-glycero-3-phospho]-glycerol + H2O = 1'-[1,2-di-(9Z,12Z-octadecadienoyl)-sn-glycero-3-phospho]-3'-[1-(9Z,12Z-octadecadienoyl)-sn-glycero-3-phospho]-glycerol + (9Z,12Z)-octadecadienoate + H(+). It catalyses the reaction 1'-[1-acyl-2-(9-hydroxy-(10E,12Z)-octadecadienoyl)-sn-glycero-3-phospho]-3'-[1,2-diacyl-sn-glycero-3-phospho]-glycerol + H2O = 9-hydroxy-(10E,12Z)-octadecadienoate + 1'-[1,2-diacyl-sn-glycero-3-phospho],3'-[1-acyl-sn-glycero-3-phospho]-glycerol + H(+). It functions in the pathway phospholipid metabolism. Calcium-independent phospholipase. Calcium-independent and membrane-bound phospholipase, that catalyzes the esterolytic cleavage of fatty acids from glycerophospholipids to yield free fatty acids and lysophospholipids, hence regulating membrane physical properties and the release of lipid second messengers and growth factors. Hydrolyzes phosphatidylethanolamine, phosphatidylcholine and probably phosphatidylinositol with a possible preference for the former. Has also a broad substrate specificity in terms of fatty acid moieties, hydrolyzing saturated and mono-unsaturated fatty acids at nearly equal rates from either the sn-1 or sn-2 position in diacyl phosphatidylcholine. However, has a weak activity toward polyunsaturated fatty acids at the sn-2 position, and thereby favors the production of 2-arachidonoyl lysophosphatidylcholine, a key branch point metabolite in eicosanoid signaling. On the other hand, can produce arachidonic acid from the sn-1 position of diacyl phospholipid and from the sn-2 position of arachidonate-containing plasmalogen substrates. Therefore, plays an important role in the mobilization of arachidonic acid in response to cellular stimuli and the generation of lipid second messengers. Can also hydrolyze lysophosphatidylcholine. In the mitochondrial compartment, catalyzes the hydrolysis and release of oxidized aliphatic chains from cardiolipin and integrates mitochondrial bioenergetics and signaling. It is essential for maintaining efficient bioenergetic mitochondrial function through tailoring mitochondrial membrane lipid metabolism and composition. This chain is Calcium-independent phospholipase A2-gamma, found in Oryctolagus cuniculus (Rabbit).